The primary structure comprises 1108 residues: Mediator of RNA polymerase II transcription subunit 14 (1108 aa).

3 disordered regions span residues M1 to T30, S35 to L54, and Q1048 to T1108. Over residues S35–N52 the composition is skewed to polar residues. The segment covering Q1048–L1080 has biased composition (low complexity).

Belongs to the Mediator complex subunit 14 family. Component of the Mediator complex.

Its subcellular location is the nucleus. In terms of biological role, component of the Mediator complex, a coactivator involved in the regulated transcription of nearly all RNA polymerase II-dependent genes. Mediator functions as a bridge to convey information from gene-specific regulatory proteins to the basal RNA polymerase II transcription machinery. Mediator is recruited to promoters by direct interactions with regulatory proteins and serves as a scaffold for the assembly of a functional preinitiation complex with RNA polymerase II and the general transcription factors. This chain is Mediator of RNA polymerase II transcription subunit 14 (RGR1), found in Pyricularia oryzae (strain 70-15 / ATCC MYA-4617 / FGSC 8958) (Rice blast fungus).